The primary structure comprises 1272 residues: Myosin-binding protein C, cardiac-type (1272 aa).

The tract at residues 95 to 147 is disordered; that stretch reads KEPEKSEPVAPAEASPAPAASELPAPPVESNQNPEVPPAETQPEEPVDPIGLF. Over residues 102-117 the composition is skewed to low complexity; the sequence is PVAPAEASPAPAASEL. In terms of domain architecture, Ig-like C2-type 1 spans 137 to 252; the sequence is PEEPVDPIGL…NLIVNEAPVS (116 aa). A Phosphoserine; by PKA and PKC modification is found at Ser-265. Thr-274 is subject to Phosphothreonine; by PKA and PKC. Ser-300 carries the phosphoserine; by PKA modification. Ig-like C2-type domains follow at residues 359 to 451, 452 to 542, 543 to 640, and 644 to 763; these read KKST…VKEP, PILI…VQEK, KLEV…FVPR, and PKIH…ADIT. 2 Fibronectin type-III domains span residues 772 to 868 and 870 to 965; these read PPEA…IAPP and EPTH…VQEI. Positions 969–1057 constitute an Ig-like C2-type 6 domain; that stretch reads PKICVPRHLR…ENMTDTVAIT (89 aa). The region spanning 1066–1161 is the Fibronectin type-III 3 domain; it reads PPQNIKLADV…TKNPAYIQKT (96 aa). Ser-1169 carries the post-translational modification Phosphoserine; by PKC. In terms of domain architecture, Ig-like C2-type 7 spans 1179–1263; sequence PKFTHPLVNR…VNERGEAEIE (85 aa).

The protein belongs to the immunoglobulin superfamily. MyBP family. Post-translationally, substrate for phosphorylation by PKA and PKC. Reversible phosphorylation appears to modulate contraction. As to expression, expressed specifically in cardiac muscle among adult tissues, but is also expressed transiently in the skeletal muscle at early developmental stages. Isoform Type I is found in embryonic skeletal muscle and isoform Type II is found in both embryonic skeletal and cardiac muscle.

Thick filament-associated protein located in the crossbridge region of vertebrate striated muscle A bands. In vitro it binds MHC, F-actin and native thin filaments, and modifies the activity of actin-activated myosin ATPase. It may modulate muscle contraction or may play a more structural role. May be involved in the early phase of myofibrillogenesis. The chain is Myosin-binding protein C, cardiac-type (MYBPC3) from Gallus gallus (Chicken).